A 235-amino-acid chain; its full sequence is Phosphoribosylaminoimidazole-succinocarboxamide synthase (235 aa).

This sequence belongs to the SAICAR synthetase family.

The catalysed reaction is 5-amino-1-(5-phospho-D-ribosyl)imidazole-4-carboxylate + L-aspartate + ATP = (2S)-2-[5-amino-1-(5-phospho-beta-D-ribosyl)imidazole-4-carboxamido]succinate + ADP + phosphate + 2 H(+). Its pathway is purine metabolism; IMP biosynthesis via de novo pathway; 5-amino-1-(5-phospho-D-ribosyl)imidazole-4-carboxamide from 5-amino-1-(5-phospho-D-ribosyl)imidazole-4-carboxylate: step 1/2. The sequence is that of Phosphoribosylaminoimidazole-succinocarboxamide synthase from Streptococcus gordonii (strain Challis / ATCC 35105 / BCRC 15272 / CH1 / DL1 / V288).